The chain runs to 258 residues: Very-long-chain aldehyde decarbonylase GL1-9 (258 aa).

5 helical membrane-spanning segments follow: residues 13–33 (MGTF…QLVL), 63–83 (GVLL…MVTS), 88–108 (VVVQ…MLVM), 149–169 (PLEG…VSGM), and 175–195 (VFFF…LWLP). Residues 101–237 (FLVAMLVMDS…FSIWDRILGT (137 aa)) enclose the Fatty acid hydroxylase domain.

Belongs to the sterol desaturase family. In terms of assembly, homodimer.

Its subcellular location is the endoplasmic reticulum membrane. The enzyme catalyses a long-chain fatty aldehyde + 2 NADPH + O2 + H(+) = a long-chain alkane + formate + 2 NADP(+) + H2O. Its function is as follows. Aldehyde decarbonylase involved in the conversion of aldehydes to alkanes. Core component of a very-long-chain alkane synthesis complex. The chain is Very-long-chain aldehyde decarbonylase GL1-9 from Oryza sativa subsp. indica (Rice).